The sequence spans 332 residues: Tetraacyldisaccharide 4'-kinase (332 aa).

60–67 (TVGGTGKT) is an ATP binding site.

It belongs to the LpxK family.

The enzyme catalyses a lipid A disaccharide + ATP = a lipid IVA + ADP + H(+). The protein operates within glycolipid biosynthesis; lipid IV(A) biosynthesis; lipid IV(A) from (3R)-3-hydroxytetradecanoyl-[acyl-carrier-protein] and UDP-N-acetyl-alpha-D-glucosamine: step 6/6. Functionally, transfers the gamma-phosphate of ATP to the 4'-position of a tetraacyldisaccharide 1-phosphate intermediate (termed DS-1-P) to form tetraacyldisaccharide 1,4'-bis-phosphate (lipid IVA). This Pseudomonas aeruginosa (strain LESB58) protein is Tetraacyldisaccharide 4'-kinase.